The following is a 561-amino-acid chain: Potassium-transporting ATPase potassium-binding subunit (561 aa).

Transmembrane regions (helical) follow at residues 4 to 24, 65 to 85, 133 to 153, 177 to 197, 253 to 273, 285 to 305, 380 to 400, 417 to 437, 484 to 504, and 528 to 548; these read IVMQ…PLGI, AVSV…VLML, IGLT…LFAV, LYIL…QGVV, FTNL…VVMF, AIMT…TISE, GLYG…LLVG, MVCL…AVAV, MVGA…ALYL, and FIGL…LPAL.

This sequence belongs to the KdpA family. As to quaternary structure, the system is composed of three essential subunits: KdpA, KdpB and KdpC.

The protein resides in the cell membrane. In terms of biological role, part of the high-affinity ATP-driven potassium transport (or Kdp) system, which catalyzes the hydrolysis of ATP coupled with the electrogenic transport of potassium into the cytoplasm. This subunit binds the extracellular potassium ions and delivers the ions to the membrane domain of KdpB through an intramembrane tunnel. The polypeptide is Potassium-transporting ATPase potassium-binding subunit (Listeria monocytogenes serotype 4b (strain F2365)).